A 1137-amino-acid polypeptide reads, in one-letter code: 2'-5'-oligoadenylate synthase 3 (1137 aa).

Position 1 is an N-acetylmethionine (Met1). An OAS domain 1 region spans residues 6–341 (TPAGALDKLV…GALVQPWEGP (336 aa)). 2 interaction with dsRNA regions span residues 12–56 (DKLV…VIRI) and 185–199 (ELRK…VKLK). Positions 342–461 (GLPCAGILDL…GSQMGPDLSQ (120 aa)) are linker. Polar residues predominate over residues 434-453 (QSTASSNTPPGHSSMSTAGS). A disordered region spans residues 434 to 462 (QSTASSNTPPGHSSMSTAGSQMGPDLSQI). OAS domain stretches follow at residues 462–792 (IPSK…PWDV) and 800–1134 (TPAQ…WPVK). Ser854 contributes to the ATP binding site. Residues Asp866, Asp868, and Asp938 each contribute to the Mg(2+) site. ATP is bound by residues Arg997, Lys1000, and Gln1019.

The protein belongs to the 2-5A synthase family. Monomer. Requires Mg(2+) as cofactor.

It localises to the cytoplasm. The protein resides in the nucleus. The enzyme catalyses 3 ATP = 5'-triphosphoadenylyl-(2'-&gt;5')-adenylyl-(2'-&gt;5')-adenosine + 2 diphosphate. With respect to regulation, produced as a latent enzyme which is activated by dsRNA generated during the course of viral infection. Strongly activated by long dsRNAs at least 50 nucleotides in length. ssRNA does not activate the enzyme. Interferon-induced, dsRNA-activated antiviral enzyme which plays a critical role in cellular innate antiviral response. In addition, it may also play a role in other cellular processes such as apoptosis, cell growth, differentiation and gene regulation. Synthesizes preferentially dimers of 2'-5'-oligoadenylates (2-5A) from ATP which then bind to the inactive monomeric form of ribonuclease L (RNase L) leading to its dimerization and subsequent activation. Activation of RNase L leads to degradation of cellular as well as viral RNA, resulting in the inhibition of protein synthesis, thus terminating viral replication. Can mediate the antiviral effect via the classical RNase L-dependent pathway or an alternative antiviral pathway independent of RNase L. The chain is 2'-5'-oligoadenylate synthase 3 (Oas3) from Rattus norvegicus (Rat).